The following is a 447-amino-acid chain: GTPase Der (447 aa).

EngA-type G domains lie at 4-165 and 180-357; these read QIIT…PEEE and LQIV…KIWN. GTP is bound by residues 10-17, 57-61, 119-122, 186-193, 233-237, and 298-301; these read GRPNVGKS, DTPGL, NKCE, GRPNAGKS, DTAGL, and NKWD. Residues 358-443 enclose the KH-like domain; that stretch reads KKITTSKLNE…PIRFTYVKTK (86 aa).

This sequence belongs to the TRAFAC class TrmE-Era-EngA-EngB-Septin-like GTPase superfamily. EngA (Der) GTPase family. In terms of assembly, associates with the 50S ribosomal subunit.

GTPase that plays an essential role in the late steps of ribosome biogenesis. The protein is GTPase Der of Rickettsia rickettsii (strain Sheila Smith).